A 283-amino-acid chain; its full sequence is Phosphatidylserine decarboxylase proenzyme (283 aa).

Catalysis depends on charge relay system; for autoendoproteolytic cleavage activity residues Asp-88, His-145, and Ser-248. The active-site Schiff-base intermediate with substrate; via pyruvic acid; for decarboxylase activity is the Ser-248. A Pyruvic acid (Ser); by autocatalysis modification is found at Ser-248.

Belongs to the phosphatidylserine decarboxylase family. PSD-B subfamily. Prokaryotic type I sub-subfamily. In terms of assembly, heterodimer of a large membrane-associated beta subunit and a small pyruvoyl-containing alpha subunit. It depends on pyruvate as a cofactor. Post-translationally, is synthesized initially as an inactive proenzyme. Formation of the active enzyme involves a self-maturation process in which the active site pyruvoyl group is generated from an internal serine residue via an autocatalytic post-translational modification. Two non-identical subunits are generated from the proenzyme in this reaction, and the pyruvate is formed at the N-terminus of the alpha chain, which is derived from the carboxyl end of the proenzyme. The autoendoproteolytic cleavage occurs by a canonical serine protease mechanism, in which the side chain hydroxyl group of the serine supplies its oxygen atom to form the C-terminus of the beta chain, while the remainder of the serine residue undergoes an oxidative deamination to produce ammonia and the pyruvoyl prosthetic group on the alpha chain. During this reaction, the Ser that is part of the protease active site of the proenzyme becomes the pyruvoyl prosthetic group, which constitutes an essential element of the active site of the mature decarboxylase.

Its subcellular location is the cell membrane. The catalysed reaction is a 1,2-diacyl-sn-glycero-3-phospho-L-serine + H(+) = a 1,2-diacyl-sn-glycero-3-phosphoethanolamine + CO2. It participates in phospholipid metabolism; phosphatidylethanolamine biosynthesis; phosphatidylethanolamine from CDP-diacylglycerol: step 2/2. Its function is as follows. Catalyzes the formation of phosphatidylethanolamine (PtdEtn) from phosphatidylserine (PtdSer). The polypeptide is Phosphatidylserine decarboxylase proenzyme (Methylibium petroleiphilum (strain ATCC BAA-1232 / LMG 22953 / PM1)).